Reading from the N-terminus, the 737-residue chain is ATP-dependent RNA helicase DDX50 (737 aa).

The disordered stretch occupies residues Met-1–Thr-131. Positions Met-11 to Ser-20 are enriched in acidic residues. Basic and acidic residues-rich tracts occupy residues His-38 to Gly-51, Lys-67 to Lys-87, and Ser-117 to Thr-131. Residues Ser-41, Ser-82, Ser-86, Ser-121, and Ser-122 each carry the phosphoserine modification. Lys-125 participates in a covalent cross-link: Glycyl lysine isopeptide (Lys-Gly) (interchain with G-Cter in SUMO2). The Q motif motif lies at Gly-137–Val-165. A Helicase ATP-binding domain is found at Phe-168–Gln-347. Ala-181 to Thr-188 lines the ATP pocket. A Phosphothreonine modification is found at Thr-247. A DEVD box motif is present at residues Asp-290–Asp-293. The Helicase C-terminal domain maps to Asp-380–Lys-524. Position 518 is a phosphoserine (Ser-518). The tract at residues Tyr-668 to Asp-737 is disordered. Residues Ser-673–Ser-687 show a composition bias toward low complexity. The segment covering Gly-691–Ser-701 has biased composition (gly residues). The span at Gly-702–Gly-712 shows a compositional bias: low complexity. A compositionally biased stretch (basic residues) spans Arg-720–Asp-737.

The protein belongs to the DEAD box helicase family. DDX21/DDX50 subfamily. As to quaternary structure, interacts with C1QBP. Interacts with the ubiquitin ligase CTLH complex through GID4. Interacts with TICAM1. In terms of tissue distribution, highest expression in skeletal muscle, liver, heart, placenta, and kidney.

The protein resides in the nucleus. It localises to the nucleolus. The protein localises to the cytoplasm. It catalyses the reaction ATP + H2O = ADP + phosphate + H(+). In terms of biological role, ATP-dependent RNA helicase that may play a role in various aspects of RNA metabolism including pre-mRNA splicing or ribosomal RNA production. Also acts as a viral restriction factor and promotes the activation of the NF-kappa-B and IRF3 signaling pathways following its stimulation with viral RNA or infection with RNA and DNA viruses. For instance, decreases vaccinia virus, herpes simplex virus, Zika virus or dengue virus replication during the early stage of infection. Mechanistically, acts via the adapter TICAM1 and independently of the DDX1-DDX21-DHX36 helicase complex to induce the production of interferon-beta. The polypeptide is ATP-dependent RNA helicase DDX50 (DDX50) (Homo sapiens (Human)).